A 245-amino-acid chain; its full sequence is Orotidine 5'-phosphate decarboxylase (245 aa).

Residues Asp22, Lys44, 71–80, Thr131, Arg192, Gln201, Gly221, and Arg222 each bind substrate; that span reads DLKFHDIPNT. Lys73 (proton donor) is an active-site residue.

The protein belongs to the OMP decarboxylase family. Type 1 subfamily. As to quaternary structure, homodimer.

It carries out the reaction orotidine 5'-phosphate + H(+) = UMP + CO2. Its pathway is pyrimidine metabolism; UMP biosynthesis via de novo pathway; UMP from orotate: step 2/2. Its function is as follows. Catalyzes the decarboxylation of orotidine 5'-monophosphate (OMP) to uridine 5'-monophosphate (UMP). This Escherichia fergusonii (strain ATCC 35469 / DSM 13698 / CCUG 18766 / IAM 14443 / JCM 21226 / LMG 7866 / NBRC 102419 / NCTC 12128 / CDC 0568-73) protein is Orotidine 5'-phosphate decarboxylase.